A 29-amino-acid chain; its full sequence is Cytochrome b6-f complex subunit 8 (29 aa).

The chain crosses the membrane as a helical span at residues 3–23 (IVSIAWAALMVVFSFSLSLVV).

It belongs to the PetN family. The 4 large subunits of the cytochrome b6-f complex are cytochrome b6, subunit IV (17 kDa polypeptide, PetD), cytochrome f and the Rieske protein, while the 4 small subunits are PetG, PetL, PetM and PetN. The complex functions as a dimer.

It is found in the plastid. It localises to the chloroplast thylakoid membrane. Functionally, component of the cytochrome b6-f complex, which mediates electron transfer between photosystem II (PSII) and photosystem I (PSI), cyclic electron flow around PSI, and state transitions. This chain is Cytochrome b6-f complex subunit 8, found in Phaseolus vulgaris (Kidney bean).